Reading from the N-terminus, the 198-residue chain is Small ribosomal subunit protein eS1 (198 aa).

Belongs to the eukaryotic ribosomal protein eS1 family.

This is Small ribosomal subunit protein eS1 from Methanosphaerula palustris (strain ATCC BAA-1556 / DSM 19958 / E1-9c).